A 351-amino-acid chain; its full sequence is Soluble TNF receptor II (351 aa).

The N-terminal stretch at 1 to 19 (MKSVLYSYILFLSCIIING) is a signal peptide. 2 TNFR-Cys repeats span residues 31–67 (KCKD…NTQC) and 69–110 (PCGS…NRIC). Cystine bridges form between C32–C43, C44–C57, C47–C67, C70–C85, C88–C102, and C92–C110. N-linked (GlcNAc...) asparagine; by host glycosylation is found at N103, N191, and N250.

The protein belongs to the orthopoxvirus OPG002 family.

The protein resides in the secreted. Functionally, inhibits host immune defense by binding to host TNF and various chemokines in the extracellular space. Binds host CC chemokines (beta chemokines) and CXC chemokines (alpha chemokines). This chain is Soluble TNF receptor II (OPG002), found in Bos taurus (Bovine).